We begin with the raw amino-acid sequence, 724 residues long: N-alpha-acetyltransferase 35, NatC auxiliary subunit (724 aa).

Belongs to the MAK10 family. Component of the N-terminal acetyltransferase C (NatC) complex.

Its subcellular location is the cytoplasm. Its function is as follows. Auxillary component of the N-terminal acetyltransferase C (NatC) complex which catalyzes acetylation of N-terminal methionine residues. N-terminal acetylation protects proteins from ubiquitination and degradation by the N-end rule pathway. Regulates cell proliferation during embryonic development. The protein is N-alpha-acetyltransferase 35, NatC auxiliary subunit (naa35) of Danio rerio (Zebrafish).